The following is a 965-amino-acid chain: Kinesin-like protein KIN-7K, chloroplastic (965 aa).

The tract at residues 1 to 69 is disordered; sequence MASRQGSKSR…PQTAQRSKEN (69 aa). The span at 19–28 shows a compositional bias: low complexity; the sequence is STASSTTSSS. Positions 29-38 are enriched in polar residues; it reads KLYQETSIDG. The segment covering 40 to 56 has biased composition (low complexity); it reads SSPASSSAQSKQQFFSP. The region spanning 69–388 is the Kinesin motor domain; it reads NVTVTVRFRP…LKFAHRAKHI (320 aa). An ATP-binding site is contributed by 149–156; the sequence is GVTSSGKT. A coiled-coil region spans residues 389–483; that stretch reads EIQAEQNKII…LTKLILVSTK (95 aa). Residues 551-561 are compositionally biased toward basic residues; sequence LLNWLKPKKRD. Disordered regions lie at residues 551-633 and 842-888; these read LLNW…KMSD and ATQK…ELRM. A compositionally biased stretch (low complexity) spans 564–577; sequence SSASDQSSVVKSNS. A compositionally biased stretch (basic and acidic residues) spans 606 to 623; it reads SEPREDREALEDSSHEME. Coiled-coil stretches lie at residues 628-703 and 738-846; these read SNKM…FVMT and NRII…TQKS. Positions 851-862 are enriched in low complexity; it reads RNKTGTTTNVRN. Residues 864–888 show a composition bias toward basic and acidic residues; that stretch reads GRRESLAKRQEHDSPSMELKRELRM. Positions 896-931 form a coiled coil; it reads YEAALGEKEQREAELERILEETKQREAYLENELANM. The segment at 942 to 965 is disordered; the sequence is QGADSEISDSISETRQTEQTEGSF. Positions 949-965 are enriched in polar residues; that stretch reads SDSISETRQTEQTEGSF.

This sequence belongs to the TRAFAC class myosin-kinesin ATPase superfamily. Kinesin family. KIN-7 subfamily.

The protein localises to the plastid. Its subcellular location is the chloroplast. In Arabidopsis thaliana (Mouse-ear cress), this protein is Kinesin-like protein KIN-7K, chloroplastic.